The following is a 137-amino-acid chain: Putative protein YjhV (137 aa).

Polar residues predominate over residues 1 to 16 (MVGYHQTNQKTDTGKT). Positions 1-20 (MVGYHQTNQKTDTGKTLTRR) are disordered.

The protein is Putative protein YjhV (yjhV) of Escherichia coli (strain K12).